The chain runs to 90 residues: UPF0223 protein LMHCC_1569 (90 aa).

It belongs to the UPF0223 family.

This is UPF0223 protein LMHCC_1569 from Listeria monocytogenes serotype 4a (strain HCC23).